Reading from the N-terminus, the 535-residue chain is Alpha-1,3-mannosyl-glycoprotein 4-beta-N-acetylglucosaminyltransferase A (535 aa).

At 1-6 the chain is on the cytoplasmic side; it reads MRLRNG. A helical; Signal-anchor for type II membrane protein membrane pass occupies residues 7-27; the sequence is TVATVLVFITTFLSLSWYTAW. Residues 28–54 adopt a coiled-coil conformation; sequence QNGKEKLIAYQREFHALKERLRIAEHR. Residues 28–535 lie on the Lumenal side of the membrane; the sequence is QNGKEKLIAY…NEIHIKKMTN (508 aa). Residues Asn-77, Asn-85, and Asn-458 are each glycosylated (N-linked (GlcNAc...) asparagine).

This sequence belongs to the glycosyltransferase 54 family. The cofactor is a divalent metal cation. In terms of processing, N-glycosylated.

It localises to the golgi apparatus membrane. It is found in the secreted. It carries out the reaction N(4)-{beta-D-GlcNAc-(1-&gt;2)-alpha-D-Man-(1-&gt;3)-[beta-D-GlcNAc-(1-&gt;2)-alpha-D-Man-(1-&gt;6)]-beta-D-Man-(1-&gt;4)-beta-D-GlcNAc-(1-&gt;4)-beta-D-GlcNAc}-L-asparaginyl-[protein] + UDP-N-acetyl-alpha-D-glucosamine = N(4)-{beta-D-GlcNAc-(1-&gt;2)-[beta-D-GlcNAc-(1-&gt;4)]-alpha-D-Man-(1-&gt;3)-[beta-D-GlcNAc-(1-&gt;2)-alpha-D-Man-(1-&gt;6)]-beta-D-Man-(1-&gt;4)-beta-D-GlcNAc-(1-&gt;4)-beta-D-GlcNAc}-L-asparaginyl-[protein] + UDP + H(+). The catalysed reaction is an N(4)-{beta-D-GlcNAc-(1-&gt;2)-alpha-D-Man-(1-&gt;3)-[alpha-D-Man-(1-&gt;6)]-beta-D-Man-(1-&gt;4)-beta-D-GlcNAc-(1-&gt;4)-beta-D-GlcNAc}-L-asparaginyl-[protein] + UDP-N-acetyl-alpha-D-glucosamine = an N(4)-{beta-D-GlcNAc-(1-&gt;2)-[beta-D-GlcNAc-(1-&gt;4)]-alpha-D-Man-(1-&gt;3)-[alpha-D-Man-(1-&gt;6)]-beta-D-Man-(1-&gt;4)-beta-D-GlcNAc-(1-&gt;4)-beta-D-GlcNAc}-L-asparaginyl-[protein] + UDP + H(+). The enzyme catalyses an N(4)-{beta-D-GlcNAc-(1-&gt;2)-alpha-D-Man-(1-&gt;3)-[beta-D-GlcNAc-(1-&gt;2)-[beta-D-GlcNAc-(1-&gt;6)]-alpha-D-Man-(1-&gt;6)]-beta-D-Man-(1-&gt;4)-beta-D-GlcNAc-(1-&gt;4)-beta-D-GlcNAc}-L-asparaginyl-[protein] + UDP-N-acetyl-alpha-D-glucosamine = an N(4)-{beta-D-GlcNAc-(1-&gt;2)-[beta-D-GlcNAc-(1-&gt;4)]-alpha-D-Man-(1-&gt;3)-[beta-D-GlcNAc-(1-&gt;2)-[beta-D-GlcNAc-(1-&gt;6)]-alpha-D-Man-(1-&gt;6)]-beta-D-Man-(1-&gt;4)-beta-D-GlcNAc-(1-&gt;4)-beta-D-GlcNAc}-L-asparaginyl-[protein] + UDP + H(+). It catalyses the reaction an N(4)-{beta-D-GlcNAc-(1-&gt;2)-alpha-D-Man-(1-&gt;3)-[beta-D-GlcNAc-(1-&gt;2)-alpha-D-Man-(1-&gt;6)]-beta-D-Man-(1-&gt;4)-beta-D-GlcNAc-(1-&gt;4)-[alpha-L-Fuc-(1-&gt;6)]-beta-D-GlcNAc}-L-asparaginyl-[protein] + UDP-N-acetyl-alpha-D-glucosamine = N(4)-{beta-D-GlcNAc-(1-&gt;2)-[beta-D-GlcNAc-(1-&gt;4)]-alpha-D-Man-(1-&gt;3)-[beta-D-GlcNAc-(1-&gt;2)-alpha-D-Man-(1-&gt;6)]-beta-D-Man-(1-&gt;4)-beta-D-GlcNAc-(1-&gt;4)-[alpha-L-Fuc-(1-&gt;6)]-beta-D-GlcNAc}-asparaginyl-[protein] + UDP + H(+). It carries out the reaction an N(4)-{beta-D-GlcNAc-(1-&gt;2)-alpha-D-Man-(1-&gt;3)-[beta-D-Gal-(1-&gt;4)-beta-D-GlcNAc-(1-&gt;2)-alpha-D-Man-(1-&gt;6)]-beta-D-Man-(1-&gt;4)-beta-D-GlcNAc-(1-&gt;4)-beta-D-GlcNAc}-L-asparaginyl-[protein] + UDP-N-acetyl-alpha-D-glucosamine = an N(4)-{beta-D-GlcNAc-(1-&gt;2)-[beta-D-GlcNAc-(1-&gt;4)]-alpha-D-Man-(1-&gt;3)-[beta-D-Gal-(1-&gt;4)-beta-D-GlcNAc-(1-&gt;2)-alpha-D-Man-(1-&gt;6)]-beta-D-Man-(1-&gt;4)-beta-D-GlcNAc-(1-&gt;4)-beta-D-GlcNAc}-L-asparaginyl-[protein] + UDP + H(+). The catalysed reaction is N(4)-{beta-D-GlcNAc-(1-&gt;2)-alpha-D-Man-(1-&gt;3)-[alpha-D-Man-(1-&gt;3)-{alpha-D-Man-(1-&gt;6)}-alpha-D-Man-(1-&gt;6)]-beta-D-Man-(1-&gt;4)-beta-D-GlcNAc-(1-&gt;4)-beta-D-GlcNAc}-asparaginyl-[protein] + UDP-N-acetyl-alpha-D-glucosamine = N(4)-{beta-D-GlcNAc-(1-&gt;2)-[beta-D-GlcNAc-(1-&gt;4)]-alpha-D-Man-(1-&gt;3)-[alpha-D-Man-(1-&gt;3)-{alpha-D-Man-(1-&gt;6)}-alpha-D-Man-(1-&gt;6)]-beta-D-Man-(1-&gt;4)-beta-D-GlcNAc-(1-&gt;4)-beta-D-GlcNAc}-asparaginyl-[protein] + UDP + H(+). The enzyme catalyses N(4)-{beta-D-GlcNAc-(1-&gt;2)-alpha-D-Man-(1-&gt;3)-beta-D-Man-(1-&gt;4)-beta-D-GlcNAc-(1-&gt;4)-beta-D-GlcNAc}-asparaginyl-[protein] + UDP-N-acetyl-alpha-D-glucosamine = N(4)-{beta-D-GlcNAc-(1-&gt;2)-[beta-D-GlcNAc-(1-&gt;4)]-alpha-D-Man-(1-&gt;3)-beta-D-Man-(1-&gt;4)-beta-D-GlcNAc-(1-&gt;4)-beta-D-GlcNAc}-asparaginyl-[protein] + UDP + H(+). It functions in the pathway protein modification; protein glycosylation. With respect to regulation, inhibited by UDP. Its function is as follows. Glycosyltransferase that catalyze the transfer of GlcNAc from UDP-GlcNAc to the GlcNAcbeta1-2Manalpha1-3 arm of the core structure of N-linked glycans through a beta1-4 linkage and participates in the production of tri- and tetra-antennary N-linked sugar chains. Involved in glucose transport by mediating SLC2A2/GLUT2 glycosylation, thereby controlling cell-surface expression of SLC2A2 in pancreatic beta cells. This is Alpha-1,3-mannosyl-glycoprotein 4-beta-N-acetylglucosaminyltransferase A from Gallus gallus (Chicken).